The sequence spans 163 residues: Cytochrome c-type biogenesis protein CcmE (163 aa).

The Cytoplasmic segment spans residues 1 to 7 (MTRKQRR). A helical; Signal-anchor for type II membrane protein membrane pass occupies residues 8 to 28 (LVFIGTCGAVLAVALGLVLWA). Over 29–163 (MSGTIVFFRS…RTASGEARAP (135 aa)) the chain is Periplasmic. Heme-binding residues include His-122 and Tyr-126. The tract at residues 134–163 (ALKKSGRWQEGAGHPAPAPPRTASGEARAP) is disordered.

The protein belongs to the CcmE/CycJ family.

Its subcellular location is the cell inner membrane. In terms of biological role, heme chaperone required for the biogenesis of c-type cytochromes. Transiently binds heme delivered by CcmC and transfers the heme to apo-cytochromes in a process facilitated by CcmF and CcmH. The protein is Cytochrome c-type biogenesis protein CcmE of Methylobacterium sp. (strain 4-46).